The following is a 198-amino-acid chain: MRGRPSLLLVYMGLATCLDTSPHREQNQVLDIFLDAPEAQSFLVGRRRFPRANHWDLELLTPGNLERECLEERCSWEEAREYFEDNTLTERFWESYTYNGKGGRGRVDVAGLAVGLTSGILLIVLAGLGAFWYLHYRRRRLRGQESCLQETGLIIPLSPQTPQSPPLPPGLPTYEQALAASGVHDAPPPPYSSLRRPH.

The first 17 residues, 1 to 17 (MRGRPSLLLVYMGLATC), serve as a signal peptide directing secretion. Residues 18 to 51 (LDTSPHREQNQVLDIFLDAPEAQSFLVGRRRFPR) constitute a propeptide that is removed on maturation. A Gla domain is found at 52 to 98 (ANHWDLELLTPGNLERECLEERCSWEEAREYFEDNTLTERFWESYTY). At 52–111 (ANHWDLELLTPGNLERECLEERCSWEEAREYFEDNTLTERFWESYTYNGKGGRGRVDVAG) the chain is on the extracellular side. An intrachain disulfide couples Cys-69 to Cys-74. Position 72 is a 4-carboxyglutamate (Glu-72). A helical membrane pass occupies residues 112–132 (LAVGLTSGILLIVLAGLGAFW). Residues 133 to 198 (YLHYRRRRLR…PPYSSLRRPH (66 aa)) are Cytoplasmic-facing. A disordered region spans residues 156–198 (PLSPQTPQSPPLPPGLPTYEQALAASGVHDAPPPPYSSLRRPH). Positions 162–171 (PQSPPLPPGL) are enriched in pro residues. The LPXY motif; mediates binding to WW domain-containing proteins signature appears at 171 to 174 (LPTY). The PPXY motif; mediates binding to WW domain-containing proteins signature appears at 188–191 (PPPY).

As to quaternary structure, interacts with NEDD4. Interacts with transcriptional coactivator YAP1. Post-translationally, gamma-carboxyglutamate residues are formed by vitamin K dependent carboxylation. These residues are essential for the binding of calcium.

The protein resides in the cell membrane. The sequence is that of Transmembrane gamma-carboxyglutamic acid protein 2 (Prrg2) from Mus musculus (Mouse).